Consider the following 1584-residue polypeptide: Sterile alpha motif domain-containing protein 9-like (1584 aa).

Residues 14–79 (WTKEHVKKWV…RSYNKLNSKS (66 aa)) enclose the SAM domain. The segment at 76 to 122 (NSKSPESDNHDPGQLDNSKPSKTEHQKNPKHTKKEEENSMSSNIDYD) is disordered. Over residues 80-112 (PESDNHDPGQLDNSKPSKTEHQKNPKHTKKEEE) the composition is skewed to basic and acidic residues.

In terms of assembly, interacts with EEA1. As to expression, widely expressed in adult and fetal tissues. Expressed in the cerebellum. Variable expression in tumors. Down-regulated in breast cancer.

Its subcellular location is the early endosome. It localises to the mitochondrion. Its function is as follows. May be involved in endosome fusion. Mediates down-regulation of growth factor signaling via internalization of growth factor receptors. This is Sterile alpha motif domain-containing protein 9-like (SAMD9L) from Homo sapiens (Human).